Consider the following 146-residue polypeptide: Large ribosomal subunit protein uL15 (146 aa).

The tract at residues 1–59 is disordered; the sequence is MRLEELKAPAGANKRTKRVGRGTGSGHGKTSTRGHKGQKSRSGGGVRPGFEGGQMPLQR. Over residues 30–39 the composition is skewed to basic residues; sequence TSTRGHKGQK. A compositionally biased stretch (gly residues) spans 42–52; that stretch reads SGGGVRPGFEG.

This sequence belongs to the universal ribosomal protein uL15 family. Part of the 50S ribosomal subunit.

In terms of biological role, binds to the 23S rRNA. The sequence is that of Large ribosomal subunit protein uL15 from Syntrophomonas wolfei subsp. wolfei (strain DSM 2245B / Goettingen).